Consider the following 156-residue polypeptide: CD-NTase/cGAS isopeptidase (156 aa).

In terms of domain architecture, MPN spans 16–156; it reads LVVIMGHVVT…LITVFKKIES (141 aa). Glu39 functions as the Proton donor/acceptor in the catalytic mechanism. Positions 101, 103, and 114 each coordinate Zn(2+). Residues 101 to 114 carry the JAMM motif motif; it reads HTHPEDRPFPSATD.

Belongs to the peptidase M67B family. Cap3 isopeptidase subfamily. It depends on Zn(2+) as a cofactor.

With respect to regulation, cleavage of conjugated proteins is inhibited by EDTA. Metalloprotease priming reversal component of a CBASS system. CBASS (cyclic oligonucleotide-based antiphage signaling system) provides immunity against bacteriophages. The CD-NTase protein (DncV) synthesizes cyclic nucleotides in response to infection; these serve as specific second messenger signals. The signals activate a diverse range of effectors, leading to bacterial cell death and thus abortive phage infection. A type II-A(GA) CBASS system. In terms of biological role, reverses the primed state of DncV, the CD-NTase. Cleaves a DncV-GFP (green fluorescent protein) fusion protein precisely at the C-terminus of DncV. Overexpression decreases the efficacy of CBASS protection against phages T2, T4, T5 and T6, blocks formation of DncV-conjugates in vivo, and inhibits in vivo activation of DncV. Antagonism of phage defense upon overexpression is CBASS-system specific, Cap3 from this bacteria only antagonizes its cognate CBASS system and not that of C.freundii, E.coli or E.hormaechei. Functionally, protects E.coli against phage infection. When the CBASS operon (capV-dncV-cap2-cap3) is introduced in E.coli MG1655 there is about 100-fold protection against phages P1 and T2. When the operon is introduced in E.coli MG1655 there is a more than 10(3) decrease in the efficiency of T2 plaque formation. Protects 100-fold against phage T5, offers no protection against T7. When the operon is introduced in E.coli MG1655 it protects against phages T2, T4, T5 and T6. Another paper shows the operon confers protection against phages P1, T2, T5 and T6 but not T4 or lambda. This is CD-NTase/cGAS isopeptidase from Vibrio cholerae serotype O1 (strain ATCC 39315 / El Tor Inaba N16961).